We begin with the raw amino-acid sequence, 254 residues long: Thiazole synthase (254 aa).

The active-site Schiff-base intermediate with DXP is the lysine 95. Residues glycine 156, 182 to 183 (AG), and 204 to 205 (NT) each bind 1-deoxy-D-xylulose 5-phosphate.

This sequence belongs to the ThiG family. In terms of assembly, homotetramer. Forms heterodimers with either ThiH or ThiS.

The protein localises to the cytoplasm. It catalyses the reaction [ThiS sulfur-carrier protein]-C-terminal-Gly-aminoethanethioate + 2-iminoacetate + 1-deoxy-D-xylulose 5-phosphate = [ThiS sulfur-carrier protein]-C-terminal Gly-Gly + 2-[(2R,5Z)-2-carboxy-4-methylthiazol-5(2H)-ylidene]ethyl phosphate + 2 H2O + H(+). It functions in the pathway cofactor biosynthesis; thiamine diphosphate biosynthesis. Catalyzes the rearrangement of 1-deoxy-D-xylulose 5-phosphate (DXP) to produce the thiazole phosphate moiety of thiamine. Sulfur is provided by the thiocarboxylate moiety of the carrier protein ThiS. In vitro, sulfur can be provided by H(2)S. The chain is Thiazole synthase from Shewanella baltica (strain OS195).